The chain runs to 255 residues: Protein PH0439 (255 aa).

Belongs to the CinA family.

The sequence is that of Protein PH0439 from Pyrococcus horikoshii (strain ATCC 700860 / DSM 12428 / JCM 9974 / NBRC 100139 / OT-3).